A 574-amino-acid polypeptide reads, in one-letter code: Glycine--tRNA ligase (574 aa).

Substrate contacts are provided by Arg-96 and Glu-162. ATP is bound by residues 194 to 196 (RNE), 204 to 209 (IRLREF), 327 to 328 (EC), and 450 to 453 (GIDR). 209-213 (FTQAE) is a substrate binding site. 446–450 (EPSYG) contacts substrate.

It belongs to the class-II aminoacyl-tRNA synthetase family.

It is found in the cytoplasm. It carries out the reaction tRNA(Gly) + glycine + ATP = glycyl-tRNA(Gly) + AMP + diphosphate. Functionally, catalyzes the attachment of glycine to tRNA(Gly). The sequence is that of Glycine--tRNA ligase from Methanococcus vannielii (strain ATCC 35089 / DSM 1224 / JCM 13029 / OCM 148 / SB).